The primary structure comprises 119 residues: Beta-2-microglobulin (119 aa).

The N-terminal stretch at 1–20 is a signal peptide; that stretch reads MARFVVAALLVLLSLSGLEA. An Ig-like C1-type domain is found at 25 to 114; it reads PKIQVYSRHP…MTFPAPKTVK (90 aa). An intrachain disulfide couples Cys-45 to Cys-100.

This sequence belongs to the beta-2-microglobulin family. Heterodimer of an alpha chain and a beta chain. Beta-2-microglobulin is the beta-chain of major histocompatibility complex class I molecules.

It is found in the secreted. Component of the class I major histocompatibility complex (MHC). Involved in the presentation of peptide antigens to the immune system. The polypeptide is Beta-2-microglobulin (B2M) (Pithecia irrorata (Gray monk saki)).